A 235-amino-acid polypeptide reads, in one-letter code: Deoxyribose-phosphate aldolase (235 aa).

Catalysis depends on Asp-107, which acts as the Proton donor/acceptor. The active-site Schiff-base intermediate with acetaldehyde is the Lys-167. The active-site Proton donor/acceptor is the Lys-197.

It belongs to the DeoC/FbaB aldolase family. DeoC type 1 subfamily. Homotetramer.

The protein localises to the cytoplasm. It carries out the reaction 2-deoxy-D-ribose 5-phosphate = D-glyceraldehyde 3-phosphate + acetaldehyde. It participates in carbohydrate degradation; 2-deoxy-D-ribose 1-phosphate degradation; D-glyceraldehyde 3-phosphate and acetaldehyde from 2-deoxy-alpha-D-ribose 1-phosphate: step 2/2. In terms of biological role, catalyzes a reversible aldol reaction between acetaldehyde and D-glyceraldehyde 3-phosphate to generate 2-deoxy-D-ribose 5-phosphate. This Aeropyrum pernix (strain ATCC 700893 / DSM 11879 / JCM 9820 / NBRC 100138 / K1) protein is Deoxyribose-phosphate aldolase.